Consider the following 447-residue polypeptide: Phosphoglucosamine mutase (447 aa).

The active-site Phosphoserine intermediate is the Ser104. Positions 104, 243, 245, and 247 each coordinate Mg(2+). Residue Ser104 is modified to Phosphoserine.

The protein belongs to the phosphohexose mutase family. The cofactor is Mg(2+). Post-translationally, activated by phosphorylation.

The catalysed reaction is alpha-D-glucosamine 1-phosphate = D-glucosamine 6-phosphate. Its function is as follows. Catalyzes the conversion of glucosamine-6-phosphate to glucosamine-1-phosphate. In Corynebacterium efficiens (strain DSM 44549 / YS-314 / AJ 12310 / JCM 11189 / NBRC 100395), this protein is Phosphoglucosamine mutase.